The sequence spans 164 residues: Cyclin-dependent kinase inhibitor 1 (164 aa).

Position 2 is an N-acetylserine (S2). S2 is covalently cross-linked (Glycyl serine ester (Ser-Gly) (interchain with G-Cter in ubiquitin)). Residues 13-41 (HGSKACRRLFGPVDSEQLRRDCDALMAGC) form a C4-type zinc finger. The tract at residues 17 to 24 (ACRRLFGP) is required for binding cyclins. The required for binding CDKs stretch occupies residues 53 to 58 (FVTETP). The interval 80-164 (AGPRGGRDDL…RRLIFSKRKP (85 aa)) is disordered. S114 carries the post-translational modification Phosphoserine; by GSK3-beta. S130 bears the Phosphoserine mark. Positions 140 to 164 (RKRRQTSMTDFYHSKRRLIFSKRKP) match the PIP-box K+4 motif motif. A Nuclear localization signal motif is present at residues 141–156 (KRRQTSMTDFYHSKRR). A Phosphothreonine; by PKA, PKB/AKT1, PIM1 and PIM2 modification is found at T145. The residue at position 146 (S146) is a Phosphoserine; by PKC and NUAK1. The interaction with TRIM39 stretch occupies residues 152–164 (HSKRRLIFSKRKP). The segment covering 153-164 (SKRRLIFSKRKP) has biased composition (basic residues). At S160 the chain carries Phosphoserine.

The protein belongs to the CDI family. Interacts with HDAC1; the interaction is prevented by competitive binding of C10orf90/FATS to HDAC1 facilitating acetylation and protein stabilization of CDKN1A/p21. Interacts with MKRN1. Interacts with PSMA3. Interacts with PCNA. Component of the ternary complex, cyclin D-CDK4-CDKN1A. Interacts (via its N-terminal domain) with CDK4; the interaction promotes the assembly of the cyclin D-CDK4 complex, its nuclear translocation and promotes the cyclin D-dependent enzyme activity of CDK4. Binding to CDK2 leads to CDK2/cyclin E inactivation at the G1-S phase DNA damage checkpoint, thereby arresting cells at the G1-S transition during DNA repair. Interacts with PIM1. Interacts with STK11 and NUAK1. Interacts with DTL and TRIM39. Interacts with PKP3; the interaction sequesters CDKN1A to the cytoplasm thereby repressing its role as an inhibitor of CDK4- and CDK6-driven RB1 phosphorylation. Post-translationally, phosphorylation of Thr-145 by Akt or of Ser-146 by PKC impairs binding to PCNA. Phosphorylation at Ser-114 by GSK3-beta enhances ubiquitination by the DCX(DTL) complex. Phosphorylation of Thr-145 by PIM2 enhances protein stability and inhibits cell proliferation. Phosphorylation of Thr-145 by PIM1 results in the relocation of CDKN1A to the cytoplasm and enhanced CDKN1A protein stability. UV radiation-induced phosphorylation at Ser-146 by NUAK1 leads to its degradation. Ubiquitinated by MKRN1; leading to polyubiquitination and 26S proteasome-dependent degradation. Ubiquitinated by the DCX(DTL) complex, also named CRL4(CDT2) complex, leading to its degradation during S phase or following UV irradiation. Ubiquitination by the DCX(DTL) complex is essential to control replication licensing and is PCNA-dependent: interacts with PCNA via its PIP-box, while the presence of the containing the 'K+4' motif in the PIP box, recruit the DCX(DTL) complex, leading to its degradation. Ubiquitination at Ser-2 leads to degradation by the proteasome pathway. Ubiquitinated by RNF114; leading to proteasomal degradation. In terms of processing, acetylation leads to protein stability. Acetylated in vitro on Lys-141, Lys-154, Lys-161 and Lys-163. Deacetylation by HDAC1 is prevented by competitive binding of C10orf90/FATS to HDAC1.

It localises to the cytoplasm. It is found in the nucleus. In terms of biological role, may be involved in p53/TP53 mediated inhibition of cellular proliferation in response to DNA damage. Binds to and inhibits cyclin-dependent kinase activity, preventing phosphorylation of critical cyclin-dependent kinase substrates and blocking cell cycle progression. Functions in the nuclear localization and assembly of cyclin D-CDK4 complex and promotes its kinase activity towards RB1. At higher stoichiometric ratios, inhibits the kinase activity of the cyclin D-CDK4 complex. Inhibits DNA synthesis by DNA polymerase delta by competing with POLD3 for PCNA binding. Plays an important role in controlling cell cycle progression and DNA damage-induced G2 arrest. Negatively regulates the CDK4- and CDK6-driven phosphorylation of RB1 in keratinocytes, thereby resulting in the release of E2F1 and subsequent transcription of E2F1-driven G1/S phase promoting genes. This chain is Cyclin-dependent kinase inhibitor 1 (CDKN1A), found in Felis catus (Cat).